The chain runs to 78 residues: DNA-directed RNA polymerase subunit omega (78 aa).

The protein belongs to the RNA polymerase subunit omega family. In terms of assembly, in cyanobacteria the RNAP catalytic core is composed of 2 alpha, 1 beta, 1 beta', 1 gamma and 1 omega subunit. When a sigma factor is associated with the core the holoenzyme is formed, which can initiate transcription.

The catalysed reaction is RNA(n) + a ribonucleoside 5'-triphosphate = RNA(n+1) + diphosphate. Its function is as follows. Promotes RNA polymerase assembly. Latches the N- and C-terminal regions of the beta' subunit thereby facilitating its interaction with the beta and alpha subunits. In Prochlorococcus marinus (strain MIT 9301), this protein is DNA-directed RNA polymerase subunit omega.